We begin with the raw amino-acid sequence, 216 residues long: Serine/threonine-protein phosphatase 1 (216 aa).

Residues D24, H26, D53, and N79 each contribute to the Mn(2+) site. H80 acts as the Proton donor in catalysis. H185 contacts Mn(2+).

Belongs to the PPP phosphatase family. PP-1 subfamily. Mn(2+) is required as a cofactor.

It carries out the reaction O-phospho-L-seryl-[protein] + H2O = L-seryl-[protein] + phosphate. The catalysed reaction is O-phospho-L-threonyl-[protein] + H2O = L-threonyl-[protein] + phosphate. With respect to regulation, inhibited by cadmium, copper, zinc when added cobalt when added concomitantly with manganese. Can hydrolyze phosphorylated Ser-, Thr- or Tyr-substrates in vitro. The natural substrate is unknown. The protein is Serine/threonine-protein phosphatase 1 (pphA) of Salmonella typhimurium (strain LT2 / SGSC1412 / ATCC 700720).